Reading from the N-terminus, the 656-residue chain is Membrane-associated tyrosine- and threonine-specific cdc2-inhibitory kinase wee-1.3 (656 aa).

A compositionally biased stretch (polar residues) spans 1–11 (MDETENNTSID). The tract at residues 1–24 (MDETENNTSIDSVEVGPSSPRVVA) is disordered. Positions 107–354 (FQIDEIIGRG…SDALRKHLSI (248 aa)) constitute a Protein kinase domain. ATP-binding positions include 113–121 (IGRGSFGEV) and K136. The active-site Proton acceptor is D227. Residues N232 and D245 each coordinate Mg(2+). Disordered stretches follow at residues 449 to 552 (PFDF…NSSI) and 617 to 656 (KGKE…GDEN). The segment covering 486 to 505 (ATCSSSNSSAIETAEDSLSS) has biased composition (polar residues). Positions 617-631 (KGKEKPVVEPAELRQ) are enriched in basic and acidic residues. Residues 646–656 (ASFQGSSGDEN) are compositionally biased toward polar residues.

The protein belongs to the protein kinase superfamily. Ser/Thr protein kinase family. WEE1 subfamily.

The protein localises to the golgi apparatus membrane. Its subcellular location is the cytoplasm. The enzyme catalyses L-seryl-[protein] + ATP = O-phospho-L-seryl-[protein] + ADP + H(+). It catalyses the reaction L-threonyl-[protein] + ATP = O-phospho-L-threonyl-[protein] + ADP + H(+). Functionally, acts as a negative regulator of entry into mitosis (G2 to M transition) by phosphorylation of the CDK1 kinase during oocyte maturation. Required for embryonic development, germline proliferation and initiation of meiosis during spermatogenesis. Required for chromosome structure during mitosis and negative regulation of nuclear envelope breakdown. In Caenorhabditis briggsae, this protein is Membrane-associated tyrosine- and threonine-specific cdc2-inhibitory kinase wee-1.3.